A 127-amino-acid polypeptide reads, in one-letter code: Cuticle protein 4 (127 aa).

Position 1 is a pyrrolidone carboxylic acid (Q1). Repeat copies occupy residues 31 to 39 and 84 to 92.

The sequence is that of Cuticle protein 4 from Blaberus craniifer (Death's head cockroach).